The primary structure comprises 214 residues: EEF1A lysine methyltransferase 1 (214 aa).

Serine 2 carries the N-acetylserine modification. A Phosphoserine modification is found at serine 2.

It belongs to the class I-like SAM-binding methyltransferase superfamily. EFM5 family.

The protein localises to the cytoplasm. The catalysed reaction is L-lysyl-[protein] + 3 S-adenosyl-L-methionine = N(6),N(6),N(6)-trimethyl-L-lysyl-[protein] + 3 S-adenosyl-L-homocysteine + 3 H(+). Protein-lysine methyltransferase that selectively catalyzes the trimethylation of EEF1A at 'Lys-79'. The chain is EEF1A lysine methyltransferase 1 from Mus musculus (Mouse).